Consider the following 251-residue polypeptide: uncharacterized protein (251 aa).

It to Anabaena PCC 7120 alr2406.

This is an uncharacterized protein from Synechocystis sp. (strain ATCC 27184 / PCC 6803 / Kazusa).